The sequence spans 159 residues: Major latex protein 149 (159 aa).

It belongs to the MLP family. In terms of tissue distribution, laticifer.

The protein resides in the vacuole. It localises to the cytoplasmic vesicle. Its function is as follows. Not known; MLPs constitute up to 50% of the soluble latex protein. The polypeptide is Major latex protein 149 (MLP149) (Papaver somniferum (Opium poppy)).